A 163-amino-acid chain; its full sequence is Putative 4-hydroxy-4-methyl-2-oxoglutarate aldolase (163 aa).

Substrate-binding positions include 76–79 (GDMI) and R98. D99 is a binding site for a divalent metal cation.

This sequence belongs to the class II aldolase/RraA-like family. In terms of assembly, homotrimer. A divalent metal cation is required as a cofactor.

The enzyme catalyses 4-hydroxy-4-methyl-2-oxoglutarate = 2 pyruvate. It catalyses the reaction oxaloacetate + H(+) = pyruvate + CO2. Its function is as follows. Catalyzes the aldol cleavage of 4-hydroxy-4-methyl-2-oxoglutarate (HMG) into 2 molecules of pyruvate. Also contains a secondary oxaloacetate (OAA) decarboxylase activity due to the common pyruvate enolate transition state formed following C-C bond cleavage in the retro-aldol and decarboxylation reactions. The protein is Putative 4-hydroxy-4-methyl-2-oxoglutarate aldolase of Pseudomonas fluorescens (strain Pf0-1).